We begin with the raw amino-acid sequence, 430 residues long: Enolase (430 aa).

Gln-167 lines the (2R)-2-phosphoglycerate pocket. Residue Glu-209 is the Proton donor of the active site. Positions 246, 287, and 314 each coordinate Mg(2+). (2R)-2-phosphoglycerate is bound by residues Lys-339, Arg-368, Ser-369, and Lys-390. Lys-339 acts as the Proton acceptor in catalysis.

It belongs to the enolase family. The cofactor is Mg(2+).

It is found in the cytoplasm. The protein localises to the secreted. It localises to the cell surface. It carries out the reaction (2R)-2-phosphoglycerate = phosphoenolpyruvate + H2O. It participates in carbohydrate degradation; glycolysis; pyruvate from D-glyceraldehyde 3-phosphate: step 4/5. Functionally, catalyzes the reversible conversion of 2-phosphoglycerate (2-PG) into phosphoenolpyruvate (PEP). It is essential for the degradation of carbohydrates via glycolysis. This is Enolase from Prochlorococcus marinus (strain MIT 9515).